Here is a 193-residue protein sequence, read N- to C-terminus: Small ribosomal subunit protein uS7 (193 aa).

The protein belongs to the universal ribosomal protein uS7 family. Part of the 30S ribosomal subunit.

In terms of biological role, one of the primary rRNA binding proteins, it binds directly to 16S rRNA where it nucleates assembly of the head domain of the 30S subunit. Is located at the subunit interface close to the decoding center. This is Small ribosomal subunit protein uS7 from Saccharolobus solfataricus (strain ATCC 35092 / DSM 1617 / JCM 11322 / P2) (Sulfolobus solfataricus).